The following is a 1184-amino-acid chain: Protein stu1 (1184 aa).

HEAT repeat units follow at residues 92-130 (FCPV…EHYV) and 162-194 (RSYV…FQGA). 2 stretches are compositionally biased toward basic and acidic residues: residues 229–240 (SSTARPRSRVEP) and 308–317 (EAEKAPHMET). A disordered region spans residues 229–336 (SSTARPRSRV…APQPLHAETS (108 aa)). Residues 463–499 (VTYTPRLLQHVTSACQDKNAQLRLFAAGWLKTLLNKQ) form an HEAT 3 repeat. 2 disordered regions span residues 564-584 (LEKD…SDTL) and 602-906 (ARLA…RVEE). Positions 572 to 584 (NRDQSSYLSSDTL) are enriched in polar residues. Residues 640–649 (APLSSLSSAP) show a composition bias toward low complexity. The span at 723-737 (SASNENETQVATQVA) shows a compositional bias: polar residues. Composition is skewed to basic and acidic residues over residues 787-811 (AGRH…ENKL) and 882-895 (EQDR…DSAE).

The protein belongs to the CLASP family. As to quaternary structure, interacts with microtubules.

The protein localises to the cytoplasm. The protein resides in the cytoskeleton. Its subcellular location is the nucleus. It is found in the spindle. Its function is as follows. Microtubule binding protein that promotes the stabilization of dynamic microtubules. Required for mitotic spindle formation. The sequence is that of Protein stu1 (stu1) from Aspergillus oryzae (strain ATCC 42149 / RIB 40) (Yellow koji mold).